We begin with the raw amino-acid sequence, 514 residues long: Sugar transport protein 10 (514 aa).

Residues 1 to 18 (MAGGAFVSEGGGGGRSYE) lie on the Cytoplasmic side of the membrane. The next 10 helical transmembrane spans lie at 19–39 (GGVTAFVIMTCIVAAMGGLLF), 86–106 (LFTSSLYLAALVASFMASVIT), 113–133 (VSMFIGGLAFLIGALFNAFAV), 135–155 (VSMLIIGRLLLGVGVGFANQS), 170–190 (GALNIGFQMAITIGILVANLI), 204–224 (VSLGLAAVPAVVMVIGSFILP), 285–305 (LIFCSAIPFFQQITGINVIMF), 320–340 (AALMSAVITGVVNMLSTFVSI), 350–370 (LLFLEGGIQMFICQLLVGSFI), and 389–409 (WILAFICVYVAGFAWSWGPLG). C77 and C449 form a disulfide bridge. Q177 provides a ligand contact to beta-D-glucose. Beta-D-glucose contacts are provided by Q295, Q296, N301, and N332. Beta-D-glucose is bound at residue W410. Helical transmembrane passes span 428–448 (INVSVNMFFTFLIGQFFLTML) and 453–473 (FGLFYFFASMVAIMTVFIYFL). The Cytoplasmic segment spans residues 474 to 514 (LPETKGVPIEEMGRVWKQHWFWKKYIPEDAIIGGHDDNNTN).

Belongs to the major facilitator superfamily. Sugar transporter (TC 2.A.1.1) family. Expressed in primordia of lateral roots, pollinated stigmata, and pollen tubes.

It localises to the membrane. It carries out the reaction D-glucose(out) + H(+)(out) = D-glucose(in) + H(+)(in). It catalyses the reaction D-mannose(out) + H(+)(out) = D-mannose(in) + H(+)(in). The catalysed reaction is D-galactose(in) + H(+)(in) = D-galactose(out) + H(+)(out). In terms of biological role, hexose-H(+) symporter that catalyzes the high-affinity uptake of glucose, galactose and mannose. Proton-coupled symporter responsible for the uptake of glucose from the apoplast into the cells. The sequence is that of Sugar transport protein 10 from Arabidopsis thaliana (Mouse-ear cress).